An 840-amino-acid polypeptide reads, in one-letter code: Lysine-specific demethylase JMJ27 (840 aa).

Residues methionine 1–arginine 10 are compositionally biased toward basic residues. Residues methionine 1–serine 52 form a disordered region. The segment covering proline 11–serine 38 has biased composition (basic and acidic residues). 8 residues coordinate Zn(2+): cysteine 80, cysteine 83, cysteine 95, cysteine 98, cysteine 104, cysteine 107, cysteine 124, and cysteine 127. The segment at cysteine 80–cysteine 127 adopts an RING-type; degenerate zinc-finger fold. The JmjC domain occupies proline 502–arginine 798. Histidine 546 and aspartate 548 together coordinate Fe cation. The tract at residues lysine 594–serine 678 is disordered. A compositionally biased stretch (basic and acidic residues) spans glutamate 595–asparagine 620. Residues glutamate 621 to serine 631 show a composition bias toward polar residues. The span at glutamate 635–asparagine 646 shows a compositional bias: basic and acidic residues. The span at proline 647–isoleucine 659 shows a compositional bias: polar residues. The segment covering glutamine 660–serine 678 has biased composition (basic and acidic residues). Fe cation is bound at residue histidine 766.

The protein belongs to the JARID1 histone demethylase family. Interacts with RPN1A. The cofactor is Fe(2+). In terms of tissue distribution, expressed in seedlings, inflorescences, flowers and siliques, and, at low levels, in roots, leaves (including vascular bundles) and stems. Particularly observed in stomatal guard cells.

It localises to the nucleus. It is found in the cytoplasm. The catalysed reaction is N(6),N(6)-dimethyl-L-lysyl(9)-[histone H3] + 2-oxoglutarate + O2 = N(6)-methyl-L-lysyl(9)-[histone H3] + formaldehyde + succinate + CO2. It carries out the reaction N(6)-methyl-L-lysyl(9)-[histone H3] + 2-oxoglutarate + O2 = L-lysyl(9)-[histone H3] + formaldehyde + succinate + CO2. It catalyses the reaction N(6),N(6)-dimethyl-L-lysyl(9)-[histone H3] + 2 2-oxoglutarate + 2 O2 = L-lysyl(9)-[histone H3] + 2 formaldehyde + 2 succinate + 2 CO2. Histone demethylase that demethylates 'Lys-9' (H3K9me) of histone H3 with a specific activity for H3K9me1 and H3K9me2. No activity on H3K4, H3K27, H3K36, H3R2 and H4R3 methyl marks, but weak activity on H3K9me3. Involved in regulation of gene expression. Regulates flowering time by repressing the major flowering regulator CONSTANS (CO) and promoting FLOWERING LOCUS C (FLC). Exhibits a positive impact on abscisic acid- (ABA), hydrogen peroxide- (H(2)O(2)) and calcium- (Ca(2+)) induced stomatal closure. Promotes stomatal-closure-dependent drought-stress responses through its histone demethylase activity toward at least GOLS2 and RD20 loci, thus protecting them from silencing by removing H3K9me2 marks in drought conditions. Required for plant defenses leading to resistance against the virulent bacterial pathogen Pseudomonas syringae pv. tomato DC3000 (Pst DC3000) via a negative regulation of WRKY25 (a repressor of defense) and by triggering the expression of several pathogenesis-related (PR) proteins (e.g. PR1, PR3, PR4 and PR5). In Arabidopsis thaliana (Mouse-ear cress), this protein is Lysine-specific demethylase JMJ27.